Reading from the N-terminus, the 127-residue chain is Glycine cleavage system H protein 1 (127 aa).

A Lipoyl-binding domain is found at 20 to 101 (SVTVGITAYA…MGEGWFFRFI (82 aa)). Residue K60 is modified to N6-lipoyllysine.

It belongs to the GcvH family. The glycine cleavage system is composed of four proteins: P, T, L and H. It depends on (R)-lipoate as a cofactor.

The glycine cleavage system catalyzes the degradation of glycine. The H protein shuttles the methylamine group of glycine from the P protein to the T protein. In Pseudomonas putida (strain ATCC 47054 / DSM 6125 / CFBP 8728 / NCIMB 11950 / KT2440), this protein is Glycine cleavage system H protein 1.